A 2291-amino-acid chain; its full sequence is Protein Ycf2 A (2291 aa).

Position 1642-1649 (1642-1649) interacts with ATP; that stretch reads GSIGTGRS.

Belongs to the Ycf2 family.

It localises to the plastid. The protein localises to the chloroplast stroma. In terms of biological role, probable ATPase of unknown function. Its presence in a non-photosynthetic plant (Epifagus virginiana) and experiments in tobacco indicate that it has an essential function which is probably not related to photosynthesis. This is Protein Ycf2 A (ycf2-A) from Atropa belladonna (Belladonna).